The sequence spans 157 residues: Endoribonuclease YbeY (157 aa).

H114, H118, and H124 together coordinate Zn(2+).

Belongs to the endoribonuclease YbeY family. The cofactor is Zn(2+).

Its subcellular location is the cytoplasm. In terms of biological role, single strand-specific metallo-endoribonuclease involved in late-stage 70S ribosome quality control and in maturation of the 3' terminus of the 16S rRNA. The protein is Endoribonuclease YbeY of Salmonella typhimurium (strain LT2 / SGSC1412 / ATCC 700720).